A 257-amino-acid chain; its full sequence is Acyl-[acyl-carrier-protein]--UDP-N-acetylglucosamine O-acyltransferase (257 aa).

It belongs to the transferase hexapeptide repeat family. LpxA subfamily. In terms of assembly, homotrimer.

The protein localises to the cytoplasm. It catalyses the reaction a (3R)-hydroxyacyl-[ACP] + UDP-N-acetyl-alpha-D-glucosamine = a UDP-3-O-[(3R)-3-hydroxyacyl]-N-acetyl-alpha-D-glucosamine + holo-[ACP]. The protein operates within glycolipid biosynthesis; lipid IV(A) biosynthesis; lipid IV(A) from (3R)-3-hydroxytetradecanoyl-[acyl-carrier-protein] and UDP-N-acetyl-alpha-D-glucosamine: step 1/6. In terms of biological role, involved in the biosynthesis of lipid A, a phosphorylated glycolipid that anchors the lipopolysaccharide to the outer membrane of the cell. The polypeptide is Acyl-[acyl-carrier-protein]--UDP-N-acetylglucosamine O-acyltransferase (Fusobacterium nucleatum subsp. nucleatum (strain ATCC 25586 / DSM 15643 / BCRC 10681 / CIP 101130 / JCM 8532 / KCTC 2640 / LMG 13131 / VPI 4355)).